The sequence spans 499 residues: Glycerol kinase (499 aa).

Thr-17 lines the ADP pocket. 3 residues coordinate ATP: Thr-17, Thr-18, and Ser-19. Residue Thr-17 coordinates sn-glycerol 3-phosphate. Arg-21 contributes to the ADP binding site. Residues Arg-87, Glu-88, Tyr-139, and Asp-243 each coordinate sn-glycerol 3-phosphate. The glycerol site is built by Arg-87, Glu-88, Tyr-139, Asp-243, and Gln-244. The ADP site is built by Thr-265 and Gly-308. Residues Thr-265, Gly-308, Gln-312, and Gly-409 each contribute to the ATP site. Residues Gly-409 and Asn-413 each contribute to the ADP site.

This sequence belongs to the FGGY kinase family.

It carries out the reaction glycerol + ATP = sn-glycerol 3-phosphate + ADP + H(+). It participates in polyol metabolism; glycerol degradation via glycerol kinase pathway; sn-glycerol 3-phosphate from glycerol: step 1/1. With respect to regulation, inhibited by fructose 1,6-bisphosphate (FBP). Functionally, key enzyme in the regulation of glycerol uptake and metabolism. Catalyzes the phosphorylation of glycerol to yield sn-glycerol 3-phosphate. The polypeptide is Glycerol kinase (Pseudomonas putida (strain GB-1)).